Consider the following 126-residue polypeptide: Ribosome-binding factor A (126 aa).

Belongs to the RbfA family. As to quaternary structure, monomer. Binds 30S ribosomal subunits, but not 50S ribosomal subunits or 70S ribosomes.

The protein resides in the cytoplasm. In terms of biological role, one of several proteins that assist in the late maturation steps of the functional core of the 30S ribosomal subunit. Associates with free 30S ribosomal subunits (but not with 30S subunits that are part of 70S ribosomes or polysomes). Required for efficient processing of 16S rRNA. May interact with the 5'-terminal helix region of 16S rRNA. In Thermosipho africanus (strain TCF52B), this protein is Ribosome-binding factor A.